The following is an 89-amino-acid chain: Small ribosomal subunit protein uS15 (89 aa).

It belongs to the universal ribosomal protein uS15 family. In terms of assembly, part of the 30S ribosomal subunit. Forms a bridge to the 50S subunit in the 70S ribosome, contacting the 23S rRNA.

One of the primary rRNA binding proteins, it binds directly to 16S rRNA where it helps nucleate assembly of the platform of the 30S subunit by binding and bridging several RNA helices of the 16S rRNA. Its function is as follows. Forms an intersubunit bridge (bridge B4) with the 23S rRNA of the 50S subunit in the ribosome. This is Small ribosomal subunit protein uS15 from Ureaplasma parvum serovar 3 (strain ATCC 27815 / 27 / NCTC 11736).